A 451-amino-acid polypeptide reads, in one-letter code: Gamma-aminobutyric acid receptor subunit alpha-2 (451 aa).

Residues 1–28 form the signal peptide; the sequence is MKTKLNSSNMQLLLFVFLAWDPARLVLA. Residues 29–249 lie on the Extracellular side of the membrane; it reads NIQEDEAKNN…MTAHFHLKRK (221 aa). Asparagine 38 is a glycosylation site (N-linked (GlcNAc...) asparagine). Arginine 94 lines the 4-aminobutanoate pocket. A glycan (N-linked (GlcNAc...) asparagine) is linked at asparagine 138. Residue threonine 157 participates in 4-aminobutanoate binding. Cysteine 166 and cysteine 180 are disulfide-bonded. N-linked (GlcNAc...) asparagine glycosylation occurs at asparagine 201. The helical transmembrane segment at 250–270 threads the bilayer; the sequence is IGYFVIQTYLPCIMTVILSQV. The Cytoplasmic portion of the chain corresponds to 271–280; that stretch reads SFWLNRESVP. A helical membrane pass occupies residues 281–300; it reads ARTVFGVTTVLTMTTLSISA. The Extracellular segment spans residues 301 to 311; it reads RNSLPKVAYAT. A helical transmembrane segment spans residues 312–332; it reads AMDWFIAVCYAFVFSALIEFA. At 333-420 the chain is on the cytoplasmic side; the sequence is TVNYFTKRGW…FNSVSKIDRM (88 aa). The helical transmembrane segment at 421-441 threads the bilayer; it reads SRIVFPVLFGTFNLVYWATYL. Topologically, residues 442–451 are extracellular; it reads NREPVLGVSP.

Belongs to the ligand-gated ion channel (TC 1.A.9) family. Gamma-aminobutyric acid receptor (TC 1.A.9.5) subfamily. GABRA2 sub-subfamily. Heteropentamer, formed by a combination of alpha (GABRA1-6), beta (GABRB1-3), gamma (GABRG1-3), delta (GABRD), epsilon (GABRE), rho (GABRR1-3), pi (GABRP) and theta (GABRQ) subunits, each subunit exhibiting distinct physiological and pharmacological properties. Interacts with UBQLN1. Interacts with KIF21B. Interacts with LHFPL4. Interacts with SHISA7; interaction leads to the regulation of GABA(A) receptor trafficking, channel deactivation kinetics and pharmacology. Post-translationally, glycosylated.

It is found in the postsynaptic cell membrane. The protein localises to the cell membrane. The protein resides in the cytoplasmic vesicle membrane. It localises to the cell projection. Its subcellular location is the dendrite. It catalyses the reaction chloride(in) = chloride(out). Its activity is regulated as follows. Activated by pentobarbital. Inhibited by the antagonist bicuculline. Alpha subunit of the heteropentameric ligand-gated chloride channel gated by gamma-aminobutyric acid (GABA), a major inhibitory neurotransmitter in the brain. GABA-gated chloride channels, also named GABA(A) receptors (GABAAR), consist of five subunits arranged around a central pore and contain GABA active binding site(s) located at the alpha and beta subunit interface(s). When activated by GABA, GABAARs selectively allow the flow of chloride anions across the cell membrane down their electrochemical gradient. Chloride influx into the postsynaptic neuron following GABAAR opening decreases the neuron ability to generate a new action potential, thereby reducing nerve transmission. The alpha-2 subunit exhibits synaptogenic activity together with beta-2 and very little to no activity together with beta-3, the gamma-2 subunit being necessary but not sufficient to induce rapid synaptic contacts formation. This chain is Gamma-aminobutyric acid receptor subunit alpha-2 (GABRA2), found in Bos taurus (Bovine).